A 328-amino-acid chain; its full sequence is MARTLMKPDDVKGAWAIIPTPAKDDASDWRATKTVDLDETARVVNGLIDAGINGILSMGTLGEAATMTHDEKLDFIKALVDAAAGRVPIFVGTTCLNTRDTIALTRQALDIGADGTMLGVPMWCAPSVDVAVQFYKDLAEAVPEMNIAIYANPEAFKFDFPRSFWAQVAEIPQVVTAKYIGVAHLLPDLAAIRGRIKLLPIDFDYYGAARMDESIDAFWSSGAVCDPLVTTTLRDLVSQARATGDWSAARAFMGRLGPTAAPLFPNGSFKEFSTYNIALEKARMNAGGWMNAGPVRPPYHLCPEPYLEGARLSGRMWAELGKALAAEK.

This sequence belongs to the DapA family. In terms of assembly, homotrimer.

The enzyme catalyses (3E)-4-(2-hydroxyphenyl)-2-oxobut-3-enoate + H2O = salicylaldehyde + pyruvate. It participates in aromatic compound metabolism; naphthalene degradation. With respect to regulation, inhibited bye p-chloromercuribenzoate and salicylaldehyde. Activated by salicylate. Its function is as follows. Involved in the naphthalene and naphthalenesulfonate catabolic pathway. Catalyzes the transformation of trans-O-hydroxybenzylidenepyruvate (THBPA) to salicylaldehyde and pyruvate. The reaction is reversible. Can also use 2,4-dihydroxybenzalpyruvate (2,4-DHBP) and 2,6-dihydroxybenzalpyruvate (2,6-DHBP). This chain is Trans-O-hydroxybenzylidenepyruvate hydratase-aldolase (nsaE), found in Sphingobium xenophagum.